Here is a 375-residue protein sequence, read N- to C-terminus: Quinolinate synthase (375 aa).

Iminosuccinate contacts are provided by His47 and Ser64. Cys110 contacts [4Fe-4S] cluster. Iminosuccinate-binding positions include 144–146 (YVN) and Ser165. Cys235 is a binding site for [4Fe-4S] cluster. Iminosuccinate-binding positions include 261-263 (HPE) and Thr278. Cys325 is a [4Fe-4S] cluster binding site.

This sequence belongs to the quinolinate synthase family. Type 3 subfamily. [4Fe-4S] cluster is required as a cofactor.

Its subcellular location is the cytoplasm. It carries out the reaction iminosuccinate + dihydroxyacetone phosphate = quinolinate + phosphate + 2 H2O + H(+). The protein operates within cofactor biosynthesis; NAD(+) biosynthesis; quinolinate from iminoaspartate: step 1/1. Catalyzes the condensation of iminoaspartate with dihydroxyacetone phosphate to form quinolinate. This is Quinolinate synthase from Herpetosiphon aurantiacus (strain ATCC 23779 / DSM 785 / 114-95).